The primary structure comprises 397 residues: Putative serine/threonine-protein kinase R301 (397 aa).

Residues 25-397 (QIKSTSVGSG…IIRHFNSPRL (373 aa)) enclose the Protein kinase domain. ATP is bound by residues 31–39 (VGSGGSDNI) and lysine 53. Residue aspartate 218 is the Proton acceptor of the active site.

The protein belongs to the protein kinase superfamily. Ser/Thr protein kinase family.

The protein resides in the virion. It catalyses the reaction L-seryl-[protein] + ATP = O-phospho-L-seryl-[protein] + ADP + H(+). The enzyme catalyses L-threonyl-[protein] + ATP = O-phospho-L-threonyl-[protein] + ADP + H(+). The protein is Putative serine/threonine-protein kinase R301 of Acanthamoeba polyphaga (Amoeba).